A 326-amino-acid chain; its full sequence is Pyruvate dehydrogenase E1 component subunit alpha (326 aa).

In terms of assembly, heterodimer of an alpha and a beta chain. The cofactor is thiamine diphosphate.

It catalyses the reaction N(6)-[(R)-lipoyl]-L-lysyl-[protein] + pyruvate + H(+) = N(6)-[(R)-S(8)-acetyldihydrolipoyl]-L-lysyl-[protein] + CO2. Functionally, the pyruvate dehydrogenase complex catalyzes the overall conversion of pyruvate to acetyl-CoA and CO(2). It contains multiple copies of three enzymatic components: pyruvate dehydrogenase (E1), dihydrolipoamide acetyltransferase (E2) and lipoamide dehydrogenase (E3). This is Pyruvate dehydrogenase E1 component subunit alpha (pdhA) from Rickettsia felis (strain ATCC VR-1525 / URRWXCal2) (Rickettsia azadi).